A 230-amino-acid chain; its full sequence is Phosphoribosylformylglycinamidine synthase subunit PurQ (230 aa).

The region spanning 2–226 (RVAVIVFPGS…LKTWREQNSV (225 aa)) is the Glutamine amidotransferase type-1 domain. The active-site Nucleophile is Cys86. Residues His195 and Glu197 contribute to the active site.

As to quaternary structure, part of the FGAM synthase complex composed of 1 PurL, 1 PurQ and 2 PurS subunits.

Its subcellular location is the cytoplasm. It catalyses the reaction N(2)-formyl-N(1)-(5-phospho-beta-D-ribosyl)glycinamide + L-glutamine + ATP + H2O = 2-formamido-N(1)-(5-O-phospho-beta-D-ribosyl)acetamidine + L-glutamate + ADP + phosphate + H(+). It carries out the reaction L-glutamine + H2O = L-glutamate + NH4(+). It functions in the pathway purine metabolism; IMP biosynthesis via de novo pathway; 5-amino-1-(5-phospho-D-ribosyl)imidazole from N(2)-formyl-N(1)-(5-phospho-D-ribosyl)glycinamide: step 1/2. Its function is as follows. Part of the phosphoribosylformylglycinamidine synthase complex involved in the purines biosynthetic pathway. Catalyzes the ATP-dependent conversion of formylglycinamide ribonucleotide (FGAR) and glutamine to yield formylglycinamidine ribonucleotide (FGAM) and glutamate. The FGAM synthase complex is composed of three subunits. PurQ produces an ammonia molecule by converting glutamine to glutamate. PurL transfers the ammonia molecule to FGAR to form FGAM in an ATP-dependent manner. PurS interacts with PurQ and PurL and is thought to assist in the transfer of the ammonia molecule from PurQ to PurL. This chain is Phosphoribosylformylglycinamidine synthase subunit PurQ, found in Brevibacillus brevis (strain 47 / JCM 6285 / NBRC 100599).